A 341-amino-acid chain; its full sequence is D-erythrose-4-phosphate dehydrogenase (341 aa).

Arginine 14–isoleucine 15 contacts NAD(+). Substrate is bound by residues serine 156–threonine 158, arginine 202, threonine 215–arginine 216, and arginine 238. Cysteine 157 serves as the catalytic Nucleophile. An NAD(+)-binding site is contributed by asparagine 320.

It belongs to the glyceraldehyde-3-phosphate dehydrogenase family. Epd subfamily. In terms of assembly, homotetramer.

It localises to the cytoplasm. The enzyme catalyses D-erythrose 4-phosphate + NAD(+) + H2O = 4-phospho-D-erythronate + NADH + 2 H(+). It functions in the pathway cofactor biosynthesis; pyridoxine 5'-phosphate biosynthesis; pyridoxine 5'-phosphate from D-erythrose 4-phosphate: step 1/5. Catalyzes the NAD-dependent conversion of D-erythrose 4-phosphate to 4-phosphoerythronate. This chain is D-erythrose-4-phosphate dehydrogenase, found in Idiomarina loihiensis (strain ATCC BAA-735 / DSM 15497 / L2-TR).